Consider the following 184-residue polypeptide: UPF0398 protein BCAH820_1652 (184 aa).

Belongs to the UPF0398 family.

The polypeptide is UPF0398 protein BCAH820_1652 (Bacillus cereus (strain AH820)).